A 324-amino-acid polypeptide reads, in one-letter code: Arginase (324 aa).

Residues His115, Asp143, His145, and Asp147 each coordinate Mn(2+). Substrate contacts are provided by residues 145-149 (HADIN), 156-158 (SGN), and Asp202. Asp249 and Asp251 together coordinate Mn(2+). Residues Thr263 and Glu294 each contribute to the substrate site.

Belongs to the arginase family. In terms of assembly, homotrimer. It depends on Mn(2+) as a cofactor.

The enzyme catalyses L-arginine + H2O = urea + L-ornithine. It functions in the pathway nitrogen metabolism; urea cycle; L-ornithine and urea from L-arginine: step 1/1. This is Arginase (agaA) from Emericella nidulans (strain FGSC A4 / ATCC 38163 / CBS 112.46 / NRRL 194 / M139) (Aspergillus nidulans).